Reading from the N-terminus, the 835-residue chain is Lon protease (835 aa).

Positions V36–L234 constitute a Lon N-terminal domain. ATP is bound at residue G387–T394. Residues R646–N828 form the Lon proteolytic domain. Active-site residues include S734 and K777.

Belongs to the peptidase S16 family. As to quaternary structure, homohexamer. Organized in a ring with a central cavity.

The protein localises to the cytoplasm. The enzyme catalyses Hydrolysis of proteins in presence of ATP.. Its function is as follows. ATP-dependent serine protease that mediates the selective degradation of mutant and abnormal proteins as well as certain short-lived regulatory proteins. Required for cellular homeostasis and for survival from DNA damage and developmental changes induced by stress. Degrades polypeptides processively to yield small peptide fragments that are 5 to 10 amino acids long. Binds to DNA in a double-stranded, site-specific manner. The polypeptide is Lon protease (Protochlamydia amoebophila (strain UWE25)).